Here is a 54-residue protein sequence, read N- to C-terminus: Large ribosomal subunit protein bL33 (54 aa).

This sequence belongs to the bacterial ribosomal protein bL33 family.

The polypeptide is Large ribosomal subunit protein bL33 (Opitutus terrae (strain DSM 11246 / JCM 15787 / PB90-1)).